The following is a 258-amino-acid chain: Meiotic drive suppressor wtf20 (258 aa).

Residues 1–71 (MKNNYTSLKS…GPTEIANPNV (71 aa)) form a disordered region. Residues 19–30 (KTDHEIDLEKGL) are compositionally biased toward basic and acidic residues. The next 3 membrane-spanning stretches (helical) occupy residues 84–106 (IYFLLRLLISVLAVSVVFFTAWV), 121–140 (FSVTIGITCPILFIAIFYFY), and 196–216 (SASAFTFMAVSSILIFIAETV).

Belongs to the WTF family. As to quaternary structure, homomer. Interacts with other proteins that exhibit high sequence similarity.

Its subcellular location is the spore membrane. The protein resides in the vacuole membrane. Functionally, acts as a suppressor component of the dual wtf meiotic drive system, and can suppress but not confer meiotic drive by compatible poisons. Wtf meiotic drive systems promote unequal transmission of alleles from the parental zygote to progeny spores by encoding a poison and an antidote from the same locus; the poison is trans-acting and forms toxic aggregates in all spores within an ascus, wherease the antidote is spore-specific and targets aggregates for degradation by the vacuole. Meiotic drive by wtf systems therefore lead to poisoning of all progeny that do not inherit the dual poison/antidote allele, or express a compatible antidote. The polypeptide is Meiotic drive suppressor wtf20 (Schizosaccharomyces pombe (strain 972 / ATCC 24843) (Fission yeast)).